Here is a 347-residue protein sequence, read N- to C-terminus: Holliday junction branch migration complex subunit RuvB (347 aa).

A large ATPase domain (RuvB-L) region spans residues Met1 to Tyr186. ATP-binding positions include Leu25, Arg26, Gly67, Lys70, Thr71, Thr72, Glu133 to Tyr135, Arg176, Tyr186, and Arg223. Thr71 provides a ligand contact to Mg(2+). The tract at residues Ser187 to Arg257 is small ATPAse domain (RuvB-S). Positions Gly260–Phe347 are head domain (RuvB-H). DNA is bound by residues Arg315 and Arg320.

This sequence belongs to the RuvB family. As to quaternary structure, homohexamer. Forms an RuvA(8)-RuvB(12)-Holliday junction (HJ) complex. HJ DNA is sandwiched between 2 RuvA tetramers; dsDNA enters through RuvA and exits via RuvB. An RuvB hexamer assembles on each DNA strand where it exits the tetramer. Each RuvB hexamer is contacted by two RuvA subunits (via domain III) on 2 adjacent RuvB subunits; this complex drives branch migration. In the full resolvosome a probable DNA-RuvA(4)-RuvB(12)-RuvC(2) complex forms which resolves the HJ.

It is found in the cytoplasm. It catalyses the reaction ATP + H2O = ADP + phosphate + H(+). In terms of biological role, the RuvA-RuvB-RuvC complex processes Holliday junction (HJ) DNA during genetic recombination and DNA repair, while the RuvA-RuvB complex plays an important role in the rescue of blocked DNA replication forks via replication fork reversal (RFR). RuvA specifically binds to HJ cruciform DNA, conferring on it an open structure. The RuvB hexamer acts as an ATP-dependent pump, pulling dsDNA into and through the RuvAB complex. RuvB forms 2 homohexamers on either side of HJ DNA bound by 1 or 2 RuvA tetramers; 4 subunits per hexamer contact DNA at a time. Coordinated motions by a converter formed by DNA-disengaged RuvB subunits stimulates ATP hydrolysis and nucleotide exchange. Immobilization of the converter enables RuvB to convert the ATP-contained energy into a lever motion, pulling 2 nucleotides of DNA out of the RuvA tetramer per ATP hydrolyzed, thus driving DNA branch migration. The RuvB motors rotate together with the DNA substrate, which together with the progressing nucleotide cycle form the mechanistic basis for DNA recombination by continuous HJ branch migration. Branch migration allows RuvC to scan DNA until it finds its consensus sequence, where it cleaves and resolves cruciform DNA. This chain is Holliday junction branch migration complex subunit RuvB, found in Borreliella burgdorferi (strain ATCC 35210 / DSM 4680 / CIP 102532 / B31) (Borrelia burgdorferi).